The following is a 315-amino-acid chain: 4-hydroxy-3-methylbut-2-enyl diphosphate reductase (315 aa).

Position 12 (Cys-12) interacts with [4Fe-4S] cluster. (2E)-4-hydroxy-3-methylbut-2-enyl diphosphate contacts are provided by His-41 and His-74. The dimethylallyl diphosphate site is built by His-41 and His-74. His-41 and His-74 together coordinate isopentenyl diphosphate. Residue Cys-96 participates in [4Fe-4S] cluster binding. Residue His-124 coordinates (2E)-4-hydroxy-3-methylbut-2-enyl diphosphate. Dimethylallyl diphosphate is bound at residue His-124. An isopentenyl diphosphate-binding site is contributed by His-124. Glu-126 functions as the Proton donor in the catalytic mechanism. Thr-168 lines the (2E)-4-hydroxy-3-methylbut-2-enyl diphosphate pocket. Cys-198 is a [4Fe-4S] cluster binding site. (2E)-4-hydroxy-3-methylbut-2-enyl diphosphate is bound by residues Ser-226, Ser-227, Asn-228, and Ser-270. Dimethylallyl diphosphate-binding residues include Ser-226, Ser-227, Asn-228, and Ser-270. Isopentenyl diphosphate-binding residues include Ser-226, Ser-227, Asn-228, and Ser-270.

The protein belongs to the IspH family. [4Fe-4S] cluster is required as a cofactor.

The catalysed reaction is isopentenyl diphosphate + 2 oxidized [2Fe-2S]-[ferredoxin] + H2O = (2E)-4-hydroxy-3-methylbut-2-enyl diphosphate + 2 reduced [2Fe-2S]-[ferredoxin] + 2 H(+). It carries out the reaction dimethylallyl diphosphate + 2 oxidized [2Fe-2S]-[ferredoxin] + H2O = (2E)-4-hydroxy-3-methylbut-2-enyl diphosphate + 2 reduced [2Fe-2S]-[ferredoxin] + 2 H(+). The protein operates within isoprenoid biosynthesis; dimethylallyl diphosphate biosynthesis; dimethylallyl diphosphate from (2E)-4-hydroxy-3-methylbutenyl diphosphate: step 1/1. Its pathway is isoprenoid biosynthesis; isopentenyl diphosphate biosynthesis via DXP pathway; isopentenyl diphosphate from 1-deoxy-D-xylulose 5-phosphate: step 6/6. Catalyzes the conversion of 1-hydroxy-2-methyl-2-(E)-butenyl 4-diphosphate (HMBPP) into a mixture of isopentenyl diphosphate (IPP) and dimethylallyl diphosphate (DMAPP). Acts in the terminal step of the DOXP/MEP pathway for isoprenoid precursor biosynthesis. The sequence is that of 4-hydroxy-3-methylbut-2-enyl diphosphate reductase from Pseudomonas fluorescens (strain SBW25).